We begin with the raw amino-acid sequence, 229 residues long: Endonuclease NucS (229 aa).

The protein belongs to the NucS endonuclease family.

Its subcellular location is the cytoplasm. Its function is as follows. Cleaves both 3' and 5' ssDNA extremities of branched DNA structures. The protein is Endonuclease NucS of Corynebacterium diphtheriae (strain ATCC 700971 / NCTC 13129 / Biotype gravis).